The primary structure comprises 466 residues: Cocosin 1 (466 aa).

The N-terminal stretch at 1–22 (MGSSSLLSFSLCLLLLCHLSQA) is a signal peptide. 2 disulfide bridges follow: C45–C78 and C121–C288. 2 Cupin type-1 domains span residues 50–242 (LNAL…ELAR) and 294–443 (QNIG…DEAR).

Belongs to the 11S seed storage protein (globulins) family. As to quaternary structure, hexamer; each subunit is composed of an acidic and a basic chain derived from a single precursor and linked by a disulfide bond. In terms of tissue distribution, endosperm of the seeds.

In terms of biological role, seed storage protein. The sequence is that of Cocosin 1 from Cocos nucifera (Coconut palm).